Reading from the N-terminus, the 206-residue chain is Large ribosomal subunit protein uL4 (206 aa).

It belongs to the universal ribosomal protein uL4 family. Part of the 50S ribosomal subunit.

In terms of biological role, one of the primary rRNA binding proteins, this protein initially binds near the 5'-end of the 23S rRNA. It is important during the early stages of 50S assembly. It makes multiple contacts with different domains of the 23S rRNA in the assembled 50S subunit and ribosome. Forms part of the polypeptide exit tunnel. The polypeptide is Large ribosomal subunit protein uL4 (Bradyrhizobium sp. (strain ORS 278)).